A 329-amino-acid polypeptide reads, in one-letter code: Probable carboxylesterase 13 (329 aa).

Methionine 1 carries the N-acetylmethionine modification. The Involved in the stabilization of the negatively charged intermediate by the formation of the oxyanion hole motif lies at 81 to 83; it reads HGG. Catalysis depends on residues serine 165, aspartate 269, and histidine 302.

The protein belongs to the 'GDXG' lipolytic enzyme family. In terms of tissue distribution, expressed in flowers.

The enzyme catalyses a carboxylic ester + H2O = an alcohol + a carboxylate + H(+). Its function is as follows. Carboxylesterase acting on esters with varying acyl chain length. The polypeptide is Probable carboxylesterase 13 (CXE13) (Arabidopsis thaliana (Mouse-ear cress)).